A 187-amino-acid polypeptide reads, in one-letter code: 1,6-anhydro-N-acetylmuramyl-L-alanine amidase AmpD (187 aa).

The N-acetylmuramoyl-L-alanine amidase domain occupies 29–167 (SLLVVHNISL…APDRKTDPGP (139 aa)). His34 contributes to the Zn(2+) binding site. The active-site Proton acceptor is the Glu116. The Zn(2+) site is built by His154 and Asp164.

The protein belongs to the N-acetylmuramoyl-L-alanine amidase 2 family. It depends on Zn(2+) as a cofactor.

Its subcellular location is the cytoplasm. It catalyses the reaction Hydrolyzes the link between N-acetylmuramoyl residues and L-amino acid residues in certain cell-wall glycopeptides.. Its function is as follows. Involved in cell wall peptidoglycan recycling. Specifically cleaves the amide bond between the lactyl group of N-acetylmuramic acid and the alpha-amino group of the L-alanine in degradation products containing an anhydro N-acetylmuramyl moiety. The protein is 1,6-anhydro-N-acetylmuramyl-L-alanine amidase AmpD (ampD) of Salmonella typhimurium (strain SL1344).